Reading from the N-terminus, the 371-residue chain is Dual-specificity RNA methyltransferase RlmN (371 aa).

Residue Glu114 is the Proton acceptor of the active site. Residues 120 to 352 (EEDHFTLCVS…VMTRQSKGAD (233 aa)) form the Radical SAM core domain. Cys127 and Cys357 are oxidised to a cystine. Residues Cys134, Cys138, and Cys141 each contribute to the [4Fe-4S] cluster site. S-adenosyl-L-methionine is bound by residues 183–184 (GE), Ser216, 238–240 (SLN), and Asn314. Cys357 acts as the S-methylcysteine intermediate in catalysis.

The protein belongs to the radical SAM superfamily. RlmN family. The cofactor is [4Fe-4S] cluster.

The protein resides in the cytoplasm. It catalyses the reaction adenosine(2503) in 23S rRNA + 2 reduced [2Fe-2S]-[ferredoxin] + 2 S-adenosyl-L-methionine = 2-methyladenosine(2503) in 23S rRNA + 5'-deoxyadenosine + L-methionine + 2 oxidized [2Fe-2S]-[ferredoxin] + S-adenosyl-L-homocysteine. The enzyme catalyses adenosine(37) in tRNA + 2 reduced [2Fe-2S]-[ferredoxin] + 2 S-adenosyl-L-methionine = 2-methyladenosine(37) in tRNA + 5'-deoxyadenosine + L-methionine + 2 oxidized [2Fe-2S]-[ferredoxin] + S-adenosyl-L-homocysteine. Functionally, specifically methylates position 2 of adenine 2503 in 23S rRNA and position 2 of adenine 37 in tRNAs. m2A2503 modification seems to play a crucial role in the proofreading step occurring at the peptidyl transferase center and thus would serve to optimize ribosomal fidelity. This chain is Dual-specificity RNA methyltransferase RlmN, found in Desulfosudis oleivorans (strain DSM 6200 / JCM 39069 / Hxd3) (Desulfococcus oleovorans).